Here is a 213-residue protein sequence, read N- to C-terminus: Probable nicotinate-nucleotide adenylyltransferase (213 aa).

It belongs to the NadD family.

It carries out the reaction nicotinate beta-D-ribonucleotide + ATP + H(+) = deamido-NAD(+) + diphosphate. Its pathway is cofactor biosynthesis; NAD(+) biosynthesis; deamido-NAD(+) from nicotinate D-ribonucleotide: step 1/1. In terms of biological role, catalyzes the reversible adenylation of nicotinate mononucleotide (NaMN) to nicotinic acid adenine dinucleotide (NaAD). This Salmonella gallinarum (strain 287/91 / NCTC 13346) protein is Probable nicotinate-nucleotide adenylyltransferase.